Consider the following 436-residue polypeptide: GTPase Obg (436 aa).

In terms of domain architecture, Obg spans 2 to 160 (SMFLDTAKIQ…RELLLELKVL (159 aa)). Residues 161–338 (ADVGLVGFPS…LLDATAELLD (178 aa)) form the OBG-type G domain. Residues 167–174 (GFPSVGKS), 192–196 (FTTIV), 214–217 (DLPG), 284–287 (NKMD), and 319–321 (SSL) contribute to the GTP site. Mg(2+) is bound by residues S174 and T194. In terms of domain architecture, OCT spans 358 to 436 (GFDEEAPAFE…IGKFEFEFVD (79 aa)).

It belongs to the TRAFAC class OBG-HflX-like GTPase superfamily. OBG GTPase family. Monomer. It depends on Mg(2+) as a cofactor.

It is found in the cytoplasm. Its function is as follows. An essential GTPase which binds GTP, GDP and possibly (p)ppGpp with moderate affinity, with high nucleotide exchange rates and a fairly low GTP hydrolysis rate. Plays a role in control of the cell cycle, stress response, ribosome biogenesis and in those bacteria that undergo differentiation, in morphogenesis control. In Streptococcus gordonii (strain Challis / ATCC 35105 / BCRC 15272 / CH1 / DL1 / V288), this protein is GTPase Obg.